Consider the following 413-residue polypeptide: Glucose-1-phosphate adenylyltransferase (413 aa).

Alpha-D-glucose 1-phosphate is bound by residues Gly161, 176–177, and Ser195; that span reads EK.

It belongs to the bacterial/plant glucose-1-phosphate adenylyltransferase family. Homotetramer.

The enzyme catalyses alpha-D-glucose 1-phosphate + ATP + H(+) = ADP-alpha-D-glucose + diphosphate. It participates in glycan biosynthesis; glycogen biosynthesis. Its function is as follows. Involved in the biosynthesis of ADP-glucose, a building block required for the elongation reactions to produce glycogen. Catalyzes the reaction between ATP and alpha-D-glucose 1-phosphate (G1P) to produce pyrophosphate and ADP-Glc. The protein is Glucose-1-phosphate adenylyltransferase of Anaeromyxobacter dehalogenans (strain 2CP-C).